The chain runs to 101 residues: Small ribosomal subunit protein bS18c (101 aa).

It belongs to the bacterial ribosomal protein bS18 family. Part of the 30S ribosomal subunit.

The protein resides in the plastid. Its subcellular location is the chloroplast. The protein is Small ribosomal subunit protein bS18c of Panax ginseng (Korean ginseng).